Reading from the N-terminus, the 311-residue chain is Homoserine kinase (311 aa).

ATP is bound at residue 88–98 (PEGLGLGSSGA).

Belongs to the GHMP kinase family. Homoserine kinase subfamily.

It is found in the cytoplasm. The enzyme catalyses L-homoserine + ATP = O-phospho-L-homoserine + ADP + H(+). Its pathway is amino-acid biosynthesis; L-threonine biosynthesis; L-threonine from L-aspartate: step 4/5. In terms of biological role, catalyzes the ATP-dependent phosphorylation of L-homoserine to L-homoserine phosphate. This chain is Homoserine kinase, found in Saccharolobus solfataricus (strain ATCC 35092 / DSM 1617 / JCM 11322 / P2) (Sulfolobus solfataricus).